A 63-amino-acid polypeptide reads, in one-letter code: SPbeta prophage-derived uncharacterized protein YotC (63 aa).

This chain is SPbeta prophage-derived uncharacterized protein YotC (yotC), found in Bacillus subtilis (strain 168).